The following is a 275-amino-acid chain: 4-diphosphocytidyl-2-C-methyl-D-erythritol kinase (275 aa).

Lys-14 is a catalytic residue. 98-108 (PMGAGLGGGSS) is a binding site for ATP. Asp-140 is a catalytic residue.

This sequence belongs to the GHMP kinase family. IspE subfamily.

The catalysed reaction is 4-CDP-2-C-methyl-D-erythritol + ATP = 4-CDP-2-C-methyl-D-erythritol 2-phosphate + ADP + H(+). Its pathway is isoprenoid biosynthesis; isopentenyl diphosphate biosynthesis via DXP pathway; isopentenyl diphosphate from 1-deoxy-D-xylulose 5-phosphate: step 3/6. Catalyzes the phosphorylation of the position 2 hydroxy group of 4-diphosphocytidyl-2C-methyl-D-erythritol. This is 4-diphosphocytidyl-2-C-methyl-D-erythritol kinase from Francisella tularensis subsp. tularensis (strain FSC 198).